The primary structure comprises 231 residues: uncharacterized protein (231 aa).

Over residues 1-10 (MDGKKREVEN) the composition is skewed to basic and acidic residues. The segment at 1 to 35 (MDGKKREVENGKNGNNIKDGNSSNTTNYGKDTKTT) is disordered. A compositionally biased stretch (low complexity) spans 11–24 (GKNGNNIKDGNSSN). The span at 25 to 35 (TTNYGKDTKTT) shows a compositional bias: polar residues.

This is an uncharacterized protein from Aquifex aeolicus (strain VF5).